Reading from the N-terminus, the 197-residue chain is Adenine phosphoribosyltransferase (197 aa).

The protein belongs to the purine/pyrimidine phosphoribosyltransferase family. As to quaternary structure, homodimer.

It localises to the cytoplasm. The enzyme catalyses AMP + diphosphate = 5-phospho-alpha-D-ribose 1-diphosphate + adenine. It functions in the pathway purine metabolism; AMP biosynthesis via salvage pathway; AMP from adenine: step 1/1. In terms of biological role, catalyzes a salvage reaction resulting in the formation of AMP, that is energically less costly than de novo synthesis. This Ralstonia nicotianae (strain ATCC BAA-1114 / GMI1000) (Ralstonia solanacearum) protein is Adenine phosphoribosyltransferase.